The following is a 557-amino-acid chain: MSKLIRRVVTVLALTSMASSFASGKIEAAAAESLATRFIASTENSDDNVFQATAKKVRFGRNKNQRQEQKHTGAFCDKEFYPCEGGQCQPVDATQESCYGKMYCVRVNDDCNVEISQSVPEYATVGSPYPIEILAVGKKDCVNVVITQQLPCEVEFVSSDPATTPTSDSKLIWTIDRLGQGEKCKITVWVKPLKEGCCFTAATVCACPELRSYTKCGQPAICIKQEGPECACLRCPVCYKIEVCNTGSAIARNVVVDNPVPDGYTHASGQRVLSFNLGDMRPGDSKCFCVEFCPQKRGKVTNVATVSYCGGHKCSANVTTVVNEPCVQVNISGADWSYVCKPVEYTIVVSNPGDLKLYDVVIEDTAPSGATILEAAGAEICCNKAVWCIKEMCPGETLQFKVVAKAQSPGKFTNQVVVKTNSDCGTCTSCAEVTTHWKGLAATHMCVIDTNDPICVGENTVYRICVTNRGSAEDTNVSLILKFSKELQPVSSSGPTKGTITGNTVVFDALPKLGSKESVEFSVTLKGIAPGDARGEAILSSDTLTVPVADTENTHVY.

The signal sequence occupies residues 1–22; it reads MSKLIRRVVTVLALTSMASSFA. The propeptide occupies 23-40; that stretch reads SGKIEAAAAESLATRFIA.

Part of a disulfide cross-linked outer membrane complex (COMC) composed of the major outer membrane porin (MOMP), the small cysteine-rich protein (omcA) and the large cysteine-rich periplasmic protein (omcB).

The protein localises to the periplasm. In terms of biological role, in elementary bodies (EBs, the infectious stage, which is able to survive outside the host cell) provides the structural integrity of the outer envelope through disulfide cross-links with the small cysteine-rich protein and the major outer membrane porin. It has been described in publications as the Sarkosyl-insoluble COMC (Chlamydia outer membrane complex), and serves as the functional equivalent of peptidoglycan. This is Large cysteine-rich periplasmic protein omcB (omcB) from Chlamydophila psittaci (strain ATCC VR-125 / 6BC) (Chlamydia psittaci).